Consider the following 564-residue polypeptide: E3 ubiquitin-protein ligase hrd-like protein 1 (564 aa).

A helical transmembrane segment spans residues 17–37 (SYLALSVLVAIVASVTVFTTF). Asn-53 carries N-linked (GlcNAc...) asparagine glycosylation. 7 consecutive transmembrane segments (helical) span residues 61-81 (YGLNIEALSGHTFFQIAHYIL), 86-106 (LIWVAINSYFAILAVCTRLII), 123-143 (QAFFCYVLLTIVYLSVVIGPQ), 148-168 (VMPWMIWGGICAFLSHLQFIT), 185-205 (KISFLSLFLFFVSIAMTFLIS), 215-235 (PAVLLYFDCLLAVFRSTYILF), and 272-292 (LSFAQLLAFSPGLNLTSIFFL). The RING-type; atypical zinc-finger motif lies at 335–373 (CVVCWELLGTSRRLPCSHQFHDWCLMWWLAQDSSCPTCR). In terms of domain architecture, CUE spans 432–474 (QLQTMLEQVREMFPQMSVDIIMTDLRQSGSAQSTIENILEGRI).

It localises to the membrane. Its function is as follows. Proposed to have a role in neuroprotection. The sequence is that of E3 ubiquitin-protein ligase hrd-like protein 1 (hrdl-1) from Caenorhabditis elegans.